The sequence spans 482 residues: tRNA sulfurtransferase (482 aa).

The THUMP domain maps to Gln-61–His-165. ATP contacts are provided by residues Leu-183 to Ile-184, Lys-265, Gly-287, and Gln-296. The cysteines at positions 344 and 456 are disulfide-linked. One can recognise a Rhodanese domain in the interval Ile-404–Pro-482. The Cysteine persulfide intermediate role is filled by Cys-456.

It belongs to the ThiI family.

The protein resides in the cytoplasm. The catalysed reaction is [ThiI sulfur-carrier protein]-S-sulfanyl-L-cysteine + a uridine in tRNA + 2 reduced [2Fe-2S]-[ferredoxin] + ATP + H(+) = [ThiI sulfur-carrier protein]-L-cysteine + a 4-thiouridine in tRNA + 2 oxidized [2Fe-2S]-[ferredoxin] + AMP + diphosphate. It catalyses the reaction [ThiS sulfur-carrier protein]-C-terminal Gly-Gly-AMP + S-sulfanyl-L-cysteinyl-[cysteine desulfurase] + AH2 = [ThiS sulfur-carrier protein]-C-terminal-Gly-aminoethanethioate + L-cysteinyl-[cysteine desulfurase] + A + AMP + 2 H(+). It functions in the pathway cofactor biosynthesis; thiamine diphosphate biosynthesis. In terms of biological role, catalyzes the ATP-dependent transfer of a sulfur to tRNA to produce 4-thiouridine in position 8 of tRNAs, which functions as a near-UV photosensor. Also catalyzes the transfer of sulfur to the sulfur carrier protein ThiS, forming ThiS-thiocarboxylate. This is a step in the synthesis of thiazole, in the thiamine biosynthesis pathway. The sulfur is donated as persulfide by IscS. The polypeptide is tRNA sulfurtransferase (Vibrio vulnificus (strain CMCP6)).